The chain runs to 313 residues: Biotin synthase (313 aa).

The Radical SAM core domain occupies 28–258 (NFGNDIELCS…LFPQARLRLS (231 aa)). [4Fe-4S] cluster-binding residues include Cys46, Cys50, and Cys53. [2Fe-2S] cluster is bound by residues Cys90, Cys121, Cys181, and Arg256.

The protein belongs to the radical SAM superfamily. Biotin synthase family. As to quaternary structure, homodimer. [4Fe-4S] cluster is required as a cofactor. It depends on [2Fe-2S] cluster as a cofactor.

The catalysed reaction is (4R,5S)-dethiobiotin + (sulfur carrier)-SH + 2 reduced [2Fe-2S]-[ferredoxin] + 2 S-adenosyl-L-methionine = (sulfur carrier)-H + biotin + 2 5'-deoxyadenosine + 2 L-methionine + 2 oxidized [2Fe-2S]-[ferredoxin]. Its pathway is cofactor biosynthesis; biotin biosynthesis; biotin from 7,8-diaminononanoate: step 2/2. Its function is as follows. Catalyzes the conversion of dethiobiotin (DTB) to biotin by the insertion of a sulfur atom into dethiobiotin via a radical-based mechanism. The protein is Biotin synthase of Francisella tularensis subsp. mediasiatica (strain FSC147).